Reading from the N-terminus, the 3097-residue chain is Neural-cadherin (3097 aa).

Residues 1–36 (MAARRCLNQLRQRYITNRFNICTCAIFLISLPFILA) form the signal peptide. Asn-97 and Asn-150 each carry an N-linked (GlcNAc...) asparagine glycan. Residues 181–305 (VRENQPAGTR…LDENDNRPIF (125 aa)) form the Cadherin 1 domain. N-linked (GlcNAc...) asparagine glycans are attached at residues Asn-325 and Asn-426. Cadherin domains lie at 430–543 (HREK…PPYF), 554–651 (VQLN…APQF), 660–756 (IPEN…APKF), 766–858 (VDED…EPKF), 867–968 (VDEN…KPVF), 978–1078 (VEEG…PPLF), 1087–1183 (VKQD…PPVW), 1193–1299 (VKEN…IPLF), 1307–1414 (VLEG…PPYF), 1423–1514 (VDEN…PPVF), 1523–1630 (ITEE…APIF), 1639–1742 (VTEN…PPQF), 1749–1861 (TEVD…KPHF), 1870–1966 (VFED…APKF), and 1974–2085 (LPEH…QPGS). Asn-930 carries N-linked (GlcNAc...) asparagine glycosylation. Asn-1266 is a glycosylation site (N-linked (GlcNAc...) asparagine). 11 cysteine pairs are disulfide-bonded: Cys-2346-Cys-2357, Cys-2351-Cys-2366, Cys-2368-Cys-2377, Cys-2559-Cys-2585, Cys-2592-Cys-2607, Cys-2601-Cys-2616, Cys-2618-Cys-2627, Cys-2787-Cys-2822, Cys-2869-Cys-2880, Cys-2874-Cys-2891, and Cys-2893-Cys-2902. Positions 2346–2377 (CRTTPCHNGGRCVDTRFGPHCSCPVGYTGPRC) constitute an EGF-like 1 domain. Residues 2379-2585 (QTTRSFRGNG…GLSRNSVAGC (207 aa)) form the Laminin G-like 1 domain. The region spanning 2592 to 2627 (CAQTETTARCWEHGNCVGSLSEARCHCRPGWTGPAC) is the EGF-like 2 domain. The region spanning 2631–2822 (TIPTTFKAQS…TMARNLEKGC (192 aa)) is the Laminin G-like 2 domain. One can recognise an EGF-like 3 domain in the interval 2869–2902 (CLDMPCMNGATCINLEPRLRYRCICPDGFWGENC). A helical membrane pass occupies residues 2917–2937 (ALAAILVCLLIILILVLVFVV). The Cytoplasmic portion of the chain corresponds to 2938 to 3097 (YNRRREAHIK…PNPHNTELEL (160 aa)).

In the embryo, the protein first appears in the mesoderm at stage 9 and is present in the myoblasts and muscle fibers by stage 12 and stage 14, respectively. At stage 12 the protein is also located in the axons of the entire CNS, but not in the glial cells. In third instar larvae protein is expressed in the CNS neuropile, photoreceptor axons and precursors of adult muscles.

It is found in the cell membrane. Its function is as follows. Cadherins are calcium-dependent cell adhesion proteins. They preferentially interact with themselves in a homophilic manner in connecting cells; cadherins may thus contribute to the sorting of heterogeneous cell types. May associate with arm neural isoform and participate in the transmission of developmental information. This Drosophila melanogaster (Fruit fly) protein is Neural-cadherin (CadN).